A 396-amino-acid polypeptide reads, in one-letter code: S-arrestin (396 aa).

This sequence belongs to the arrestin family.

In terms of biological role, arrestin is one of the major proteins of the ros (retinal rod outer segments); it binds to photoactivated-phosphorylated rhodopsin, thereby apparently preventing the transducin-mediated activation of phosphodiesterase. This Aquarana catesbeiana (American bullfrog) protein is S-arrestin.